The following is a 231-amino-acid chain: Cuticle protein LPCP-23 (231 aa).

The first 17 residues, 1–17 (MAFKFVVFAAALAYANA), serve as a signal peptide directing secretion. 2 repeat units span residues 130-133 (AAPV) and 199-202 (AAPV).

Component of the cuticle of Tenebrio molitor. In Tenebrio molitor (Yellow mealworm beetle), this protein is Cuticle protein LPCP-23 (LPCP-23).